Reading from the N-terminus, the 67-residue chain is Archaeal histone HAN1 subunit A (67 aa).

Interaction with DNA stretches follow at residues 20–22 (RVS) and 54–57 (KTVK).

It belongs to the archaeal histone HMF family. Heterodimer. Dimers then assemble into higher oligomers, with the DNA wrapped around the protein core.

Its subcellular location is the cytoplasm. The protein localises to the chromosome. Functionally, binds and compact DNA (95 to 150 base pairs) to form nucleosome-like structures that contain positive DNA supercoils. Increases the resistance of DNA to thermal denaturation (in vitro). This chain is Archaeal histone HAN1 subunit A (han1A), found in Thermococcus zilligii.